Here is a 327-residue protein sequence, read N- to C-terminus: Deoxynucleotidyltransferase terminal-interacting protein 1 (327 aa).

Residues 1 to 11 (MGATGDTGGPR) are compositionally biased toward gly residues. 2 disordered regions span residues 1 to 34 (MGAT…PVLT) and 146 to 172 (KRGR…LPGH). Positions 55-146 (MTTSFTDPAI…RLAHELPGIK (92 aa)) are important for dimerization. Residues 146–161 (KRGRQAEEESHREAPF) show a composition bias toward basic and acidic residues. The segment at residues 157–171 (REAPFPKRGKVGLPG) is a DNA-binding region (a.T hook). Residues 162–168 (PKRGKVG) carry the Nuclear localization signal motif. Residues 195-314 (REGPKWDPAR…MRKYMETLRT (120 aa)) form an important for DNA and nucleosome binding region. The segment at residues 214-235 (GSRANKALGMGGTRGRIYIKHP) is a DNA-binding region (H-T-H motif).

As to quaternary structure, monomer and homodimer. A minor proportion may form homotrimers. Interacts with ZNF541. Interacts with the terminal deoxynucleotidyltransferase DNTT. Interacts with TRERF1. Identified in a histone deacetylase complex that contains DNTTIP1, HDAC1 and MIDEAS; this complex assembles into a tetramer that contains four copies of each protein chain. Component of a histone deacetylase complex containing DNTTIP1, ZNF541, HDAC1 and HDAC2. Identified in a complex with KCTD19, HDAC1, HDAC2 and ZNF541. In terms of tissue distribution, expressed in thymus, bone marrow and spleen.

Its subcellular location is the nucleus. Increases DNTT terminal deoxynucleotidyltransferase activity (in vitro). Also acts as a transcriptional regulator, binding to the consensus sequence 5'-GNTGCATG-3' following an AT-tract. Associates with RAB20 promoter and positively regulates its transcription. Binds DNA and nucleosomes; may recruit HDAC1 complexes to nucleosomes or naked DNA. This Rattus norvegicus (Rat) protein is Deoxynucleotidyltransferase terminal-interacting protein 1 (Dnttip1).